Reading from the N-terminus, the 621-residue chain is Chaperone protein HscA homolog (621 aa).

The protein belongs to the heat shock protein 70 family.

Its function is as follows. Chaperone involved in the maturation of iron-sulfur cluster-containing proteins. Has a low intrinsic ATPase activity which is markedly stimulated by HscB. The polypeptide is Chaperone protein HscA homolog (Polynucleobacter necessarius subsp. necessarius (strain STIR1)).